We begin with the raw amino-acid sequence, 156 residues long: Superoxide dismutase [Cu-Zn] 2 (156 aa).

Positions 47, 49, and 64 each coordinate Cu cation. Cysteines 58 and 147 form a disulfide. Zn(2+) is bound by residues histidine 64, histidine 72, histidine 81, and aspartate 84. Position 121 (histidine 121) interacts with Cu cation.

It belongs to the Cu-Zn superoxide dismutase family. As to quaternary structure, homodimer. Requires Cu cation as cofactor. Zn(2+) is required as a cofactor.

The protein localises to the cytoplasm. It carries out the reaction 2 superoxide + 2 H(+) = H2O2 + O2. Functionally, destroys radicals which are normally produced within the cells and which are toxic to biological systems. The polypeptide is Superoxide dismutase [Cu-Zn] 2 (SODCC.2) (Mesembryanthemum crystallinum (Common ice plant)).